Reading from the N-terminus, the 271-residue chain is Pyrroline-5-carboxylate reductase (271 aa).

Belongs to the pyrroline-5-carboxylate reductase family.

The protein resides in the cytoplasm. The enzyme catalyses L-proline + NADP(+) = (S)-1-pyrroline-5-carboxylate + NADPH + 2 H(+). It carries out the reaction L-proline + NAD(+) = (S)-1-pyrroline-5-carboxylate + NADH + 2 H(+). The protein operates within amino-acid biosynthesis; L-proline biosynthesis; L-proline from L-glutamate 5-semialdehyde: step 1/1. Functionally, catalyzes the reduction of 1-pyrroline-5-carboxylate (PCA) to L-proline. The sequence is that of Pyrroline-5-carboxylate reductase from Staphylococcus aureus (strain Mu50 / ATCC 700699).